The primary structure comprises 153 residues: Aspartate carbamoyltransferase regulatory chain (153 aa).

Zn(2+) is bound by residues C109, C114, C138, and C141.

Belongs to the PyrI family. As to quaternary structure, contains catalytic and regulatory chains. Requires Zn(2+) as cofactor.

Functionally, involved in allosteric regulation of aspartate carbamoyltransferase. This Nitrosopumilus maritimus (strain SCM1) protein is Aspartate carbamoyltransferase regulatory chain.